A 957-amino-acid polypeptide reads, in one-letter code: MSLVSQNSRRRRRRVAKATAHNSSWGEMQAPNAPGLPADVPGSDVPQGPSDSQILQGLCASEGPSTSVLPTSAEGPSTFVPPTISEASSASGQPTISEGPGTSVLPTPSEGLSTSGPPTISKGLCTSVTLAASEGRNTSRPPTSSEEPSTSVPPTASEVPSTSLPPTPGEGTSTSVPPTAYEGPSTSVVPTPDEGPSTSVLPTPGEGPGTSVPLAATEGLSTSVQATPDEGPSTSVPPTATEGLSTPVPPTRDEGPSTSVPATPGEGPSTSVLPAASDGQSISLVPTRGKGSSTSVPPTATEGLSTSVQPTAGEGSSTSVPPTPGGGLSTSVPPTATEELSTSVPPTPGEGPSTSVLPIPGEGLSTSVPPTASDGSDTSVPPTPGEGASTLVQPTAPDGPGSSVLPNPGEGPSTLFSSSASVDRNPSKCSLVLPSPRVTKASVDSDSEGPKGAEGPIEFEVLRDCESPNSISIMGLNTSRVAITLKPQDPMEQNVAELLQFLLVKDQSKYPIRESEMREYIVKEYRNQFPEILRRAAAHLECIFRFELRELDPEAHTYILLNKLGPVPFEGLEESPNGPKMGLLMMILGQIFLNGNQAKEAEIWEMLWRMGVQRERRLSIFGNPKRLLSVEFVWQRYLDYRPVTDCKPVEYEFFWGPRSHLETTKMKILKFMAKIYNKDPMDWPEKYNEALEEDAARAFAEGWQALPHFRRPFFEEAAAEVPSPDSEVSSYSSKYAPHSWPESRLESKARKLVQLFLLMDSTKLPIPKKGILYYIGRECSKVFPDLLNRAARTLNHVYGTELVVLDPRNHSYTLYNRREMEETEEIVDSPNRPGNNFLMQVLSFIFIMGNHARESAVWAFLRGLGVQAGRKHVITCRYLSQRYIDSLRVPDSDPVQYEFVWGPRARLETSKMKALRYVARIHRKEPQDWPQQYREAMEDEANRADVGHRQIFVHNFR.

Residues 1-455 (MSLVSQNSRR…DSEGPKGAEG (455 aa)) are disordered. 2 stretches are compositionally biased toward polar residues: residues 85–96 (SEASSASGQPTI) and 104–130 (VLPT…SVTL). Residues 138–162 (TSRPPTSSEEPSTSVPPTASEVPST) show a composition bias toward low complexity. 5 stretches are compositionally biased toward polar residues: residues 219–244 (GLST…TEGL), 268–320 (PSTS…STSV), 329–344 (STSV…STSV), 364–380 (LSTS…DTSV), and 414–428 (TLFS…NPSK). 2 MAGE domains span residues 491-690 (MEQN…YNEA) and 745-936 (LESK…YREA). Residues 743 to 957 (SRLESKARKL…HRQIFVHNFR (215 aa)) are interaction with DTNA.

Interacts with DTNA. Interacts with TRIM28.

It localises to the cytoplasm. It is found in the perinuclear region. Its subcellular location is the nucleus. The protein localises to the cell membrane. Its function is as follows. May enhance ubiquitin ligase activity of RING-type zinc finger-containing E3 ubiquitin-protein ligases. Proposed to act through recruitment and/or stabilization of the Ubl-conjugating enzyme (E2) at the E3:substrate complex. This chain is Melanoma-associated antigen E1 (MAGEE1), found in Homo sapiens (Human).